The sequence spans 765 residues: Multifunctional tryptophan biosynthesis protein (765 aa).

The 195-residue stretch at 2 to 196 (ATLLIDNYDS…LSLRGGNWDE (195 aa)) folds into the Glutamine amidotransferase type-1 domain. 53 to 55 (GPG) contacts L-glutamine. Residue Cys81 is the Nucleophile; for GATase activity of the active site. L-glutamine-binding positions include Gln85 and 131-132 (SL). Catalysis depends on for GATase activity residues His170 and Glu172. The interval 231–494 (TILSRIYAQR…NLKEFVAELL (264 aa)) is indole-3-glycerol phosphate synthase. The interval 512–765 (QVKICGISSV…VEKAKSINLQ (254 aa)) is N-(5'-phosphoribosyl)anthranilate isomerase.

It carries out the reaction N-(5-phospho-beta-D-ribosyl)anthranilate = 1-(2-carboxyphenylamino)-1-deoxy-D-ribulose 5-phosphate. The catalysed reaction is 1-(2-carboxyphenylamino)-1-deoxy-D-ribulose 5-phosphate + H(+) = (1S,2R)-1-C-(indol-3-yl)glycerol 3-phosphate + CO2 + H2O. It catalyses the reaction chorismate + L-glutamine = anthranilate + pyruvate + L-glutamate + H(+). Its pathway is amino-acid biosynthesis; L-tryptophan biosynthesis; L-tryptophan from chorismate: step 1/5. The protein operates within amino-acid biosynthesis; L-tryptophan biosynthesis; L-tryptophan from chorismate: step 3/5. It participates in amino-acid biosynthesis; L-tryptophan biosynthesis; L-tryptophan from chorismate: step 4/5. Trifunctional enzyme bearing the Gln amidotransferase (GATase) domain of anthranilate synthase, indole-glycerolphosphate synthase, and phosphoribosylanthranilate isomerase activities. This is Multifunctional tryptophan biosynthesis protein (trp1) from Phycomyces blakesleeanus.